The primary structure comprises 317 residues: Transaldolase (317 aa).

Residue lysine 132 is the Schiff-base intermediate with substrate of the active site.

It belongs to the transaldolase family. Type 1 subfamily. In terms of assembly, homodimer.

The protein resides in the cytoplasm. It catalyses the reaction D-sedoheptulose 7-phosphate + D-glyceraldehyde 3-phosphate = D-erythrose 4-phosphate + beta-D-fructose 6-phosphate. It functions in the pathway carbohydrate degradation; pentose phosphate pathway; D-glyceraldehyde 3-phosphate and beta-D-fructose 6-phosphate from D-ribose 5-phosphate and D-xylulose 5-phosphate (non-oxidative stage): step 2/3. In terms of biological role, transaldolase is important for the balance of metabolites in the pentose-phosphate pathway. The chain is Transaldolase from Photorhabdus laumondii subsp. laumondii (strain DSM 15139 / CIP 105565 / TT01) (Photorhabdus luminescens subsp. laumondii).